The following is a 176-amino-acid chain: Adenine phosphoribosyltransferase (176 aa).

The protein belongs to the purine/pyrimidine phosphoribosyltransferase family. Homodimer.

It is found in the cytoplasm. It carries out the reaction AMP + diphosphate = 5-phospho-alpha-D-ribose 1-diphosphate + adenine. Its pathway is purine metabolism; AMP biosynthesis via salvage pathway; AMP from adenine: step 1/1. Its function is as follows. Catalyzes a salvage reaction resulting in the formation of AMP, that is energically less costly than de novo synthesis. This Methylobacillus flagellatus (strain ATCC 51484 / DSM 6875 / VKM B-1610 / KT) protein is Adenine phosphoribosyltransferase.